Consider the following 397-residue polypeptide: 3-ketoacyl-CoA thiolase, mitochondrial (397 aa).

The transit peptide at 1 to 16 directs the protein to the mitochondrion; not cleaved; it reads MALLRGVFIVAAKRTP. Residue K25 is modified to N6-acetyllysine; alternate. Residue K25 is modified to N6-succinyllysine; alternate. At S28 the chain carries Phosphoserine. The residue at position 45 (K45) is an N6-succinyllysine. C92 (acyl-thioester intermediate) is an active-site residue. The residue at position 119 (T119) is a Phosphothreonine. S121 carries the phosphoserine modification. Y127 is modified (phosphotyrosine). Residue T136 is modified to Phosphothreonine. K137, K143, K158, K171, K191, and K209 each carry N6-acetyllysine; alternate. N6-succinyllysine; alternate occurs at positions 137, 143, 158, 171, 191, and 209. N6-succinyllysine occurs at positions 211, 212, and 214. 2 residues coordinate CoA: R224 and T227. Position 234 is an N6-acetyllysine; alternate (K234). K234 carries the N6-succinyllysine; alternate modification. K240 bears the N6-succinyllysine mark. K241 carries the post-translational modification N6-acetyllysine. S251 lines the CoA pocket. An N6-acetyllysine mark is found at K269 and K270. An N6-acetyllysine; alternate modification is found at K305. N6-succinyllysine; alternate is present on K305. The residue at position 310 (S310) is a Phosphoserine. At K312 the chain carries N6-acetyllysine; alternate. The residue at position 312 (K312) is an N6-succinyllysine; alternate. N6-acetyllysine is present on K340. A Phosphoserine modification is found at S344. Position 375 is an N6-acetyllysine (K375). C382 serves as the catalytic Proton donor/acceptor.

Belongs to the thiolase-like superfamily. Thiolase family. Homotetramer. Interacts with BNIP3.

The protein resides in the mitochondrion. It catalyses the reaction an acyl-CoA + acetyl-CoA = a 3-oxoacyl-CoA + CoA. It carries out the reaction 2 acetyl-CoA = acetoacetyl-CoA + CoA. The catalysed reaction is acetyl-CoA + H2O = acetate + CoA + H(+). The enzyme catalyses propanoyl-CoA + H2O = propanoate + CoA + H(+). It catalyses the reaction butanoyl-CoA + H2O = butanoate + CoA + H(+). It carries out the reaction hexanoyl-CoA + H2O = hexanoate + CoA + H(+). The catalysed reaction is octanoyl-CoA + H2O = octanoate + CoA + H(+). The enzyme catalyses decanoyl-CoA + H2O = decanoate + CoA + H(+). It catalyses the reaction dodecanoyl-CoA + H2O = dodecanoate + CoA + H(+). It carries out the reaction tetradecanoyl-CoA + H2O = tetradecanoate + CoA + H(+). The catalysed reaction is hexadecanoyl-CoA + H2O = hexadecanoate + CoA + H(+). It participates in lipid metabolism; fatty acid beta-oxidation. Its function is as follows. In the production of energy from fats, this is one of the enzymes that catalyzes the last step of the mitochondrial beta-oxidation pathway, an aerobic process breaking down fatty acids into acetyl-CoA. Using free coenzyme A/CoA, catalyzes the thiolytic cleavage of medium- to long-chain unbranched 3-oxoacyl-CoAs into acetyl-CoA and a fatty acyl-CoA shortened by two carbon atoms. Also catalyzes the condensation of two acetyl-CoA molecules into acetoacetyl-CoA and could be involved in the production of ketone bodies. Also displays hydrolase activity on various fatty acyl-CoAs. Thereby, could be responsible for the production of acetate in a side reaction to beta-oxidation. Abolishes BNIP3-mediated apoptosis and mitochondrial damage. This Mus musculus (Mouse) protein is 3-ketoacyl-CoA thiolase, mitochondrial (Acaa2).